Here is a 163-residue protein sequence, read N- to C-terminus: Transcriptional repressor NrdR (163 aa).

Residues 3 to 34 fold into a zinc finger; sequence CPFCAHPEDKVVDSRESKEGESIRRRRECLKC. One can recognise an ATP-cone domain in the interval 49-139; that stretch reads YMVVKKDGRR…VYLDFKDVRE (91 aa).

It belongs to the NrdR family. The cofactor is Zn(2+).

Its function is as follows. Negatively regulates transcription of bacterial ribonucleotide reductase nrd genes and operons by binding to NrdR-boxes. This chain is Transcriptional repressor NrdR, found in Koribacter versatilis (strain Ellin345).